The primary structure comprises 635 residues: Threonine--tRNA ligase (635 aa).

The tract at residues 1–144 (MQLLLIHSDY…RTIRLEGAVP (144 aa)) is editing domain. Positions 215 to 514 (PHVELMRRLE…AEEGKVPNLP (300 aa)) are catalytic. Zn(2+) contacts are provided by C307, H359, and H483.

It belongs to the class-II aminoacyl-tRNA synthetase family. As to quaternary structure, homodimer. Zn(2+) serves as cofactor.

It localises to the cytoplasm. The enzyme catalyses tRNA(Thr) + L-threonine + ATP = L-threonyl-tRNA(Thr) + AMP + diphosphate + H(+). In terms of biological role, catalyzes the attachment of threonine to tRNA(Thr) in a two-step reaction: L-threonine is first activated by ATP to form Thr-AMP and then transferred to the acceptor end of tRNA(Thr). Also edits incorrectly charged L-seryl-tRNA(Thr). The sequence is that of Threonine--tRNA ligase from Methanococcoides burtonii (strain DSM 6242 / NBRC 107633 / OCM 468 / ACE-M).